The chain runs to 198 residues: Glycerol-3-phosphate acyltransferase 3 (198 aa).

Transmembrane regions (helical) follow at residues 4 to 24, 71 to 91, 113 to 133, and 147 to 167; these read TYLL…LVVG, LPMV…AVLG, LLCY…TLLF, and VVAV…AMCL.

The protein belongs to the PlsY family. As to quaternary structure, probably interacts with PlsX.

Its subcellular location is the cell membrane. It catalyses the reaction an acyl phosphate + sn-glycerol 3-phosphate = a 1-acyl-sn-glycero-3-phosphate + phosphate. Its pathway is lipid metabolism; phospholipid metabolism. Its function is as follows. Catalyzes the transfer of an acyl group from acyl-phosphate (acyl-PO(4)) to glycerol-3-phosphate (G3P) to form lysophosphatidic acid (LPA). This enzyme utilizes acyl-phosphate as fatty acyl donor, but not acyl-CoA or acyl-ACP. This chain is Glycerol-3-phosphate acyltransferase 3, found in Bacillus anthracis.